The sequence spans 292 residues: Malonyl-S-ACP:biotin-protein carboxyltransferase MADD (292 aa).

In terms of domain architecture, CoA carboxyltransferase C-terminal spans 1-281 (MEIMMGQGRL…RGKVMAMMDK (281 aa)).

It localises to the cytoplasm. The enzyme catalyses N(6)-biotinyl-L-lysyl-[protein] + malonyl-[ACP] = N(6)-carboxybiotinyl-L-lysyl-[protein] + acetyl-[ACP]. In terms of biological role, gamma subunit of the biotin-dependent malonate decarboxylase multienzyme complex (EC 7.2.4.4). The two subunits MADC and MADD are required for the transfer of the malonate carboxy group from the acyl-carrier protein (ACP) to the prosthetic group of the biotin carrier MADF. Required for the regeneration of ACP. The sequence is that of Malonyl-S-ACP:biotin-protein carboxyltransferase MADD (madD) from Malonomonas rubra.